Consider the following 238-residue polypeptide: Purine nucleoside phosphorylase DeoD-type (238 aa).

H4 contributes to the a purine D-ribonucleoside binding site. Phosphate-binding positions include G20, R24, R43, and 87-90 (RIGS). A purine D-ribonucleoside is bound by residues 181–183 (EME) and 205–206 (SD). D206 functions as the Proton donor in the catalytic mechanism.

The protein belongs to the PNP/UDP phosphorylase family. As to quaternary structure, homohexamer; trimer of homodimers.

It catalyses the reaction a purine D-ribonucleoside + phosphate = a purine nucleobase + alpha-D-ribose 1-phosphate. The catalysed reaction is a purine 2'-deoxy-D-ribonucleoside + phosphate = a purine nucleobase + 2-deoxy-alpha-D-ribose 1-phosphate. Functionally, catalyzes the reversible phosphorolytic breakdown of the N-glycosidic bond in the beta-(deoxy)ribonucleoside molecules, with the formation of the corresponding free purine bases and pentose-1-phosphate. The chain is Purine nucleoside phosphorylase DeoD-type from Mycoplasma pneumoniae (strain ATCC 29342 / M129 / Subtype 1) (Mycoplasmoides pneumoniae).